Here is a 253-residue protein sequence, read N- to C-terminus: Flap endonuclease Xni (253 aa).

Residue D104 coordinates Mg(2+). Positions 160 to 250 constitute a 5'-3' exonuclease domain; sequence VAPQQLTDFW…HGNLQQLRLN (91 aa). K(+)-binding residues include L171, A172, P180, I182, and I185. The tract at residues 184–189 is interaction with DNA; the sequence is GIGAKT.

Belongs to the Xni family. The cofactor is Mg(2+). It depends on K(+) as a cofactor.

Its function is as follows. Has flap endonuclease activity. During DNA replication, flap endonucleases cleave the 5'-overhanging flap structure that is generated by displacement synthesis when DNA polymerase encounters the 5'-end of a downstream Okazaki fragment. In Edwardsiella ictaluri (strain 93-146), this protein is Flap endonuclease Xni.